We begin with the raw amino-acid sequence, 476 residues long: Glycogen synthase (476 aa).

Lysine 15 contacts ADP-alpha-D-glucose.

This sequence belongs to the glycosyltransferase 1 family. Bacterial/plant glycogen synthase subfamily.

It carries out the reaction [(1-&gt;4)-alpha-D-glucosyl](n) + ADP-alpha-D-glucose = [(1-&gt;4)-alpha-D-glucosyl](n+1) + ADP + H(+). It functions in the pathway glycan biosynthesis; glycogen biosynthesis. Functionally, synthesizes alpha-1,4-glucan chains using ADP-glucose. The sequence is that of Glycogen synthase from Ligilactobacillus salivarius (strain UCC118) (Lactobacillus salivarius).